The chain runs to 318 residues: uncharacterized protein (318 aa).

Belongs to the asfivirus F317L family.

The protein localises to the virion. This is an uncharacterized protein from African swine fever virus (isolate Tick/Malawi/Lil 20-1/1983) (ASFV).